The sequence spans 1051 residues: DNA-directed RNA polymerase subunit beta (1051 aa).

Belongs to the RNA polymerase beta chain family. As to quaternary structure, in plastids the minimal PEP RNA polymerase catalytic core is composed of four subunits: alpha, beta, beta', and beta''. When a (nuclear-encoded) sigma factor is associated with the core the holoenzyme is formed, which can initiate transcription (Potential).

The protein resides in the plastid. The protein localises to the apicoplast. The enzyme catalyses RNA(n) + a ribonucleoside 5'-triphosphate = RNA(n+1) + diphosphate. DNA-dependent RNA polymerase catalyzes the transcription of DNA into RNA using the four ribonucleoside triphosphates as substrates. This chain is DNA-directed RNA polymerase subunit beta (rpoB), found in Toxoplasma gondii.